The following is a 347-amino-acid chain: NADH-ubiquinone oxidoreductase chain 2 (347 aa).

The next 11 membrane-spanning stretches (helical) occupy residues 1–21 (MNPM…SIVM), 25–45 (HWFL…PVLM), 60–80 (FLTQ…NLMF), 96–116 (MLLT…FWVP), 127–147 (GLIL…QIYP), 149–169 (INTN…GWGG), 178–198 (IMAY…IYNP), 202–222 (LLNL…LIFA), 239–259 (IITI…PLTG), 274–294 (NSVI…FFYM), and 326–346 (MMPL…FILL).

This sequence belongs to the complex I subunit 2 family. Core subunit of respiratory chain NADH dehydrogenase (Complex I) which is composed of 45 different subunits. Interacts with TMEM242.

Its subcellular location is the mitochondrion inner membrane. It catalyses the reaction a ubiquinone + NADH + 5 H(+)(in) = a ubiquinol + NAD(+) + 4 H(+)(out). Functionally, core subunit of the mitochondrial membrane respiratory chain NADH dehydrogenase (Complex I) that is believed to belong to the minimal assembly required for catalysis. Complex I functions in the transfer of electrons from NADH to the respiratory chain. The immediate electron acceptor for the enzyme is believed to be ubiquinone. This is NADH-ubiquinone oxidoreductase chain 2 from Suncus etruscus (Etruscan shrew).